A 489-amino-acid polypeptide reads, in one-letter code: Cysteine--tRNA ligase (489 aa).

Position 27 (Cys27) interacts with Zn(2+). The 'HIGH' region motif lies at 29 to 39 (VTVYDLCHLGH). The Zn(2+) site is built by Cys211, His236, and Glu240. Positions 268–272 (KMSKS) match the 'KMSKS' region motif. ATP is bound at residue Lys271.

It belongs to the class-I aminoacyl-tRNA synthetase family. As to quaternary structure, monomer. The cofactor is Zn(2+).

Its subcellular location is the cytoplasm. The enzyme catalyses tRNA(Cys) + L-cysteine + ATP = L-cysteinyl-tRNA(Cys) + AMP + diphosphate. This chain is Cysteine--tRNA ligase, found in Prochlorococcus marinus (strain MIT 9312).